The following is a 284-amino-acid chain: 4-hydroxy-3-methylbut-2-enyl diphosphate reductase (284 aa).

Residue Cys-12 participates in [4Fe-4S] cluster binding. (2E)-4-hydroxy-3-methylbut-2-enyl diphosphate-binding residues include His-40 and His-72. Residues His-40 and His-72 each contribute to the dimethylallyl diphosphate site. Positions 40 and 72 each coordinate isopentenyl diphosphate. Cys-94 is a binding site for [4Fe-4S] cluster. Position 122 (His-122) interacts with (2E)-4-hydroxy-3-methylbut-2-enyl diphosphate. Dimethylallyl diphosphate is bound at residue His-122. Position 122 (His-122) interacts with isopentenyl diphosphate. The Proton donor role is filled by Glu-124. A (2E)-4-hydroxy-3-methylbut-2-enyl diphosphate-binding site is contributed by Thr-161. Cys-193 serves as a coordination point for [4Fe-4S] cluster. (2E)-4-hydroxy-3-methylbut-2-enyl diphosphate contacts are provided by Ser-221, Asn-223, and Ser-264. Dimethylallyl diphosphate-binding residues include Ser-221, Asn-223, and Ser-264. Ser-221, Asn-223, and Ser-264 together coordinate isopentenyl diphosphate.

The protein belongs to the IspH family. [4Fe-4S] cluster serves as cofactor.

It carries out the reaction isopentenyl diphosphate + 2 oxidized [2Fe-2S]-[ferredoxin] + H2O = (2E)-4-hydroxy-3-methylbut-2-enyl diphosphate + 2 reduced [2Fe-2S]-[ferredoxin] + 2 H(+). The catalysed reaction is dimethylallyl diphosphate + 2 oxidized [2Fe-2S]-[ferredoxin] + H2O = (2E)-4-hydroxy-3-methylbut-2-enyl diphosphate + 2 reduced [2Fe-2S]-[ferredoxin] + 2 H(+). The protein operates within isoprenoid biosynthesis; dimethylallyl diphosphate biosynthesis; dimethylallyl diphosphate from (2E)-4-hydroxy-3-methylbutenyl diphosphate: step 1/1. It functions in the pathway isoprenoid biosynthesis; isopentenyl diphosphate biosynthesis via DXP pathway; isopentenyl diphosphate from 1-deoxy-D-xylulose 5-phosphate: step 6/6. In terms of biological role, catalyzes the conversion of 1-hydroxy-2-methyl-2-(E)-butenyl 4-diphosphate (HMBPP) into a mixture of isopentenyl diphosphate (IPP) and dimethylallyl diphosphate (DMAPP). Acts in the terminal step of the DOXP/MEP pathway for isoprenoid precursor biosynthesis. The polypeptide is 4-hydroxy-3-methylbut-2-enyl diphosphate reductase (Dehalococcoides mccartyi (strain CBDB1)).